A 218-amino-acid chain; its full sequence is Protein-methionine-sulfoxide reductase heme-binding subunit MsrQ (218 aa).

The next 5 membrane-spanning stretches (helical) occupy residues 8-28 (VIVA…LLGW), 60-80 (FLLI…AVLI), 86-106 (LGLY…TLDL), 121-141 (PYIT…ITST), and 155-175 (VHML…WLVK).

This sequence belongs to the MsrQ family. Heterodimer of a catalytic subunit (MsrP) and a heme-binding subunit (MsrQ). FMN is required as a cofactor. Heme b serves as cofactor.

The protein localises to the cell inner membrane. Its function is as follows. Part of the MsrPQ system that repairs oxidized periplasmic proteins containing methionine sulfoxide residues (Met-O), using respiratory chain electrons. Thus protects these proteins from oxidative-stress damage caused by reactive species of oxygen and chlorine generated by the host defense mechanisms. MsrPQ is essential for the maintenance of envelope integrity under bleach stress, rescuing a wide series of structurally unrelated periplasmic proteins from methionine oxidation. MsrQ provides electrons for reduction to the reductase catalytic subunit MsrP, using the quinone pool of the respiratory chain. This Xanthomonas oryzae pv. oryzae (strain MAFF 311018) protein is Protein-methionine-sulfoxide reductase heme-binding subunit MsrQ.